The chain runs to 121 residues: Large ribosomal subunit protein uL3 (121 aa).

Glutamine 62 is subject to N5-methylglutamine.

Belongs to the universal ribosomal protein uL3 family. Part of the 50S ribosomal subunit. Forms a cluster with proteins L14 and L19. In terms of processing, methylated by PrmB.

One of the primary rRNA binding proteins, it binds directly near the 3'-end of the 23S rRNA, where it nucleates assembly of the 50S subunit. This chain is Large ribosomal subunit protein uL3 (rplC), found in Aggregatibacter actinomycetemcomitans (Actinobacillus actinomycetemcomitans).